Consider the following 191-residue polypeptide: Small ribosomal subunit protein uS5 (191 aa).

The S5 DRBM domain maps to 20-83 (FADRLVAINR…EQAKRQMIRV (64 aa)). Positions 158-191 (TSPRMVAQRRGKKVSDILKKDGEPAEAAAEPAEA) are disordered. A compositionally biased stretch (basic and acidic residues) spans 170 to 180 (KVSDILKKDGE). Over residues 182-191 (AEAAAEPAEA) the composition is skewed to low complexity.

The protein belongs to the universal ribosomal protein uS5 family. As to quaternary structure, part of the 30S ribosomal subunit. Contacts proteins S4 and S8.

Its function is as follows. With S4 and S12 plays an important role in translational accuracy. Located at the back of the 30S subunit body where it stabilizes the conformation of the head with respect to the body. The polypeptide is Small ribosomal subunit protein uS5 (Dinoroseobacter shibae (strain DSM 16493 / NCIMB 14021 / DFL 12)).